A 318-amino-acid chain; its full sequence is CRISPR-associated endonuclease Cas1 1 (318 aa).

Mn(2+) contacts are provided by glutamate 160, histidine 225, and glutamate 240.

Belongs to the CRISPR-associated endonuclease Cas1 family. As to quaternary structure, homodimer, forms a heterotetramer with a Cas2 homodimer. Mg(2+) serves as cofactor. Mn(2+) is required as a cofactor.

CRISPR (clustered regularly interspaced short palindromic repeat), is an adaptive immune system that provides protection against mobile genetic elements (viruses, transposable elements and conjugative plasmids). CRISPR clusters contain spacers, sequences complementary to antecedent mobile elements, and target invading nucleic acids. CRISPR clusters are transcribed and processed into CRISPR RNA (crRNA). Acts as a dsDNA endonuclease. Involved in the integration of spacer DNA into the CRISPR cassette. This chain is CRISPR-associated endonuclease Cas1 1, found in Thermodesulfovibrio yellowstonii (strain ATCC 51303 / DSM 11347 / YP87).